The following is a 100-amino-acid chain: Large ribosomal subunit protein uL23 (100 aa).

It belongs to the universal ribosomal protein uL23 family. Part of the 50S ribosomal subunit. Contacts protein L29, and trigger factor when it is bound to the ribosome.

One of the early assembly proteins it binds 23S rRNA. One of the proteins that surrounds the polypeptide exit tunnel on the outside of the ribosome. Forms the main docking site for trigger factor binding to the ribosome. The polypeptide is Large ribosomal subunit protein uL23 (Mycobacterium leprae (strain Br4923)).